Consider the following 300-residue polypeptide: Ribosomal protein L11 methyltransferase (300 aa).

4 residues coordinate S-adenosyl-L-methionine: Thr147, Gly168, Asp190, and Asn236.

This sequence belongs to the methyltransferase superfamily. PrmA family.

The protein resides in the cytoplasm. The enzyme catalyses L-lysyl-[protein] + 3 S-adenosyl-L-methionine = N(6),N(6),N(6)-trimethyl-L-lysyl-[protein] + 3 S-adenosyl-L-homocysteine + 3 H(+). In terms of biological role, methylates ribosomal protein L11. The sequence is that of Ribosomal protein L11 methyltransferase from Leptospira interrogans serogroup Icterohaemorrhagiae serovar Lai (strain 56601).